Consider the following 919-residue polypeptide: Periodic tryptophan protein 2 homolog (919 aa).

WD repeat units follow at residues 12–50 (GTVY…SDTL), 53–93 (ATRY…LHHF), 94–132 (HFKG…REFN), 142–181 (GPYD…NLIY), and 186–225 (GHKD…EGLR). Residues 238–267 (QREEEEEEEEDQEGDRETTIRGKATPAEEE) are disordered. Residues 240–251 (EEEEEEEEDQEG) show a composition bias toward acidic residues. The span at 252-267 (DRETTIRGKATPAEEE) shows a compositional bias: basic and acidic residues. 9 WD repeats span residues 286-325 (GDFN…LIHS), 328-368 (ISDQ…YVLK), 371-410 (GHFN…CFVT), 413-452 (EHSS…NFRT), 456-498 (PRPT…DVLS), 499-538 (GHEG…RTKE), 541-580 (ALTS…QTGS), 603-642 (AKGK…LMKR), and 700-740 (KPEI…DPFE). Residues 882–919 (TKRSLDPLGSEEEAEASEDDSLHLLGGGGRDSEEEMLA) form a disordered region. The span at 890–900 (GSEEEAEASED) shows a compositional bias: acidic residues. A phosphoserine mark is found at S898 and S902.

Belongs to the WD repeat PWP2 family. Part of the small subunit (SSU) processome, composed of more than 70 proteins and the RNA chaperone small nucleolar RNA (snoRNA) U3.

The protein localises to the nucleus. The protein resides in the nucleolus. Functionally, part of the small subunit (SSU) processome, first precursor of the small eukaryotic ribosomal subunit. During the assembly of the SSU processome in the nucleolus, many ribosome biogenesis factors, an RNA chaperone and ribosomal proteins associate with the nascent pre-rRNA and work in concert to generate RNA folding, modifications, rearrangements and cleavage as well as targeted degradation of pre-ribosomal RNA by the RNA exosome. This chain is Periodic tryptophan protein 2 homolog, found in Homo sapiens (Human).